The primary structure comprises 128 residues: Iron-sulfur cluster insertion protein ErpA (128 aa).

Iron-sulfur cluster is bound by residues C56, C120, and C122.

The protein belongs to the HesB/IscA family. In terms of assembly, homodimer. Requires iron-sulfur cluster as cofactor.

Functionally, required for insertion of 4Fe-4S clusters for at least IspG. The polypeptide is Iron-sulfur cluster insertion protein ErpA (Xanthomonas oryzae pv. oryzae (strain MAFF 311018)).